The following is a 275-amino-acid chain: MGGPGLYSGIGKKAKDLLYRDYQTDHKFTLTTYTANGPAITATSTKKADLTVGEIQSQIKNKNITVDVKANSASNVITTITADDLAAPGLKTILSFAVPDQKSGKVELQYLHDYAGINASIGLTANPVVNLSGAFGTSALAVGADVSLDTATKNFAKYNAALSYTNQDLIASLNLNNKGDSLTASYYHIVEKSGTAVGAELTHSFSSNENSLTFGTQHTLDPLTLVKARINNSGKASALIQHEFMPKSLCTISAEVDTKAIEKSSKVGIAIALKP.

This sequence belongs to the eukaryotic mitochondrial porin (TC 1.B.8.1) family.

The protein localises to the mitochondrion outer membrane. Functionally, forms a channel through the cell membrane that allows diffusion of small hydrophilic molecules. The channel adopts an open conformation at low or zero membrane potential and a closed conformation at potentials above 30-40 mV. The open state has a weak anion selectivity whereas the closed state is cation-selective. This Triticum aestivum (Wheat) protein is Mitochondrial outer membrane porin (VDAC1).